A 529-amino-acid chain; its full sequence is Type I restriction enzyme StySJI methylase subunit (529 aa).

Residues 148–153 (QYFTPR), 178–180 (TAG), and E216 each bind S-adenosyl-L-methionine. The interval 405 to 444 (YGEDPHGLSPREEGEWSFNAEESEVADSEENKNTDQHQAT) is disordered. The span at 407 to 418 (EDPHGLSPREEG) shows a compositional bias: basic and acidic residues.

The protein belongs to the N(4)/N(6)-methyltransferase family. The type I restriction/modification system is composed of three polypeptides R, M and S; the restriction enzyme has stoichiometry R(2)M(2)S(1) while the methyltransferase is M(2)S(1).

The catalysed reaction is a 2'-deoxyadenosine in DNA + S-adenosyl-L-methionine = an N(6)-methyl-2'-deoxyadenosine in DNA + S-adenosyl-L-homocysteine + H(+). The subtype gamma methyltransferase (M) subunit of a type I restriction enzyme. The M and S subunits together form a methyltransferase (MTase) that methylates two adenine residues of the sequence 5'-GAGN(6)GTRC-3'. In the presence of the R subunit the complex can also act as an endonuclease, binding to the same target sequence but cutting the DNA some distance from this site. Whether the DNA is cut or modified depends on the methylation state of the target sequence. When the target site is unmodified, the DNA is cut. When the target site is hemimethylated, the complex acts as a maintenance MTase modifying the DNA so that both strands become methylated. After locating a non-methylated recognition site, the enzyme complex serves as a molecular motor that translocates DNA in an ATP-dependent manner until a collision occurs that triggers cleavage. The sequence is that of Type I restriction enzyme StySJI methylase subunit from Salmonella typhimurium (strain LT2 / SGSC1412 / ATCC 700720).